Reading from the N-terminus, the 322-residue chain is GDSL esterase/lipase At2g04020 (322 aa).

Residues 1-26 (MGLPSSLESYLLLILLSFLNVSTIYS) form the signal peptide. Ser-50 (nucleophile) is an active-site residue. Asn-260 carries an N-linked (GlcNAc...) asparagine glycan. Catalysis depends on residues Asp-296 and His-299.

The protein belongs to the 'GDSL' lipolytic enzyme family.

Its subcellular location is the secreted. This is GDSL esterase/lipase At2g04020 from Arabidopsis thaliana (Mouse-ear cress).